We begin with the raw amino-acid sequence, 239 residues long: tRNA (guanine-N(1)-)-methyltransferase (239 aa).

Residues glycine 109 and 133–138 (IGDYVL) each bind S-adenosyl-L-methionine. Disordered regions lie at residues 163–187 (PASR…YTRP) and 217–239 (QRTR…DPGR). Basic and acidic residues-rich tracts occupy residues 165 to 180 (SRHD…RRLE) and 217 to 226 (QRTRERRPEL).

Belongs to the RNA methyltransferase TrmD family. As to quaternary structure, homodimer.

The protein localises to the cytoplasm. It carries out the reaction guanosine(37) in tRNA + S-adenosyl-L-methionine = N(1)-methylguanosine(37) in tRNA + S-adenosyl-L-homocysteine + H(+). Functionally, specifically methylates guanosine-37 in various tRNAs. This is tRNA (guanine-N(1)-)-methyltransferase from Mycolicibacterium paratuberculosis (strain ATCC BAA-968 / K-10) (Mycobacterium paratuberculosis).